A 132-amino-acid chain; its full sequence is NADH-quinone oxidoreductase subunit A (132 aa).

The next 3 helical transmembrane spans lie at 14–34 (FFTFFFIAVSICVFMLSISWI), 66–86 (FYLVAIYFVLFDVEALYLYAW), and 96–116 (IGFIEALIFILFLLSGLIYLI).

The protein belongs to the complex I subunit 3 family. NDH-1 is composed of 13 different subunits. Subunits NuoA, H, J, K, L, M, N constitute the membrane sector of the complex.

It localises to the cell membrane. The catalysed reaction is a quinone + NADH + 5 H(+)(in) = a quinol + NAD(+) + 4 H(+)(out). NDH-1 shuttles electrons from NADH, via FMN and iron-sulfur (Fe-S) centers, to quinones in the respiratory chain. The immediate electron acceptor for the enzyme in this species is believed to be ubiquinone. Couples the redox reaction to proton translocation (for every two electrons transferred, four hydrogen ions are translocated across the cytoplasmic membrane), and thus conserves the redox energy in a proton gradient. This chain is NADH-quinone oxidoreductase subunit A, found in Buchnera aphidicola subsp. Baizongia pistaciae (strain Bp).